The sequence spans 156 residues: MTKNIQVLFVCLGNICRSPMAEAVFRNEVEKAGLEARFDTIDSCGTGAWHVGNRPDPRTLEVLKKNGIHTKHLARKLSTSDFKNFDYIFAMDSSNLRNINRVKPQGSRAKVMLFGEYASPGVSKIVDDPYYGGSDGFGDCYIQLVDFSQNFLKSIA.

Cys-11 serves as the catalytic Nucleophile. The active site involves Arg-17. Catalysis depends on Asp-128, which acts as the Proton donor.

The protein belongs to the low molecular weight phosphotyrosine protein phosphatase family.

The protein resides in the cytoplasm. It catalyses the reaction O-phospho-L-tyrosyl-[protein] + H2O = L-tyrosyl-[protein] + phosphate. The catalysed reaction is a phosphate monoester + H2O = an alcohol + phosphate. Its function is as follows. May contribute to dephosphorylation of 'Tyr-15' of cdc2. The sequence is that of Low molecular weight phosphotyrosine protein phosphatase (stp1) from Schizosaccharomyces pombe (strain 972 / ATCC 24843) (Fission yeast).